Reading from the N-terminus, the 402-residue chain is Phosphoglycerate kinase (402 aa).

Residues 24-26, R39, 62-65, R121, and R161 contribute to the substrate site; these read DLN and HLGR. Residues K211, G299, E330, and 359 to 362 each bind ATP; that span reads GGDS.

It belongs to the phosphoglycerate kinase family. As to quaternary structure, monomer.

Its subcellular location is the cytoplasm. It catalyses the reaction (2R)-3-phosphoglycerate + ATP = (2R)-3-phospho-glyceroyl phosphate + ADP. The protein operates within carbohydrate degradation; glycolysis; pyruvate from D-glyceraldehyde 3-phosphate: step 2/5. The polypeptide is Phosphoglycerate kinase (Corynebacterium urealyticum (strain ATCC 43042 / DSM 7109)).